Here is a 295-residue protein sequence, read N- to C-terminus: Elongation factor Ts (295 aa).

Residues 79 to 82 (TDFV) form an involved in Mg(2+) ion dislocation from EF-Tu region.

The protein belongs to the EF-Ts family.

It localises to the cytoplasm. Functionally, associates with the EF-Tu.GDP complex and induces the exchange of GDP to GTP. It remains bound to the aminoacyl-tRNA.EF-Tu.GTP complex up to the GTP hydrolysis stage on the ribosome. In Bacillus cereus (strain B4264), this protein is Elongation factor Ts.